We begin with the raw amino-acid sequence, 941 residues long: Protein BREAST CANCER SUSCEPTIBILITY 1 homolog (941 aa).

The RING-type zinc finger occupies 16-54 (CPICLSLYNSAVSLSCNHVFCNACIVKSMKMDATCPVCK). Disordered regions lie at residues 87-282 (FVSQ…ILPS) and 303-528 (KVKV…GKDD). Composition is skewed to basic and acidic residues over residues 96-115 (SDKE…DKNR) and 125-136 (KRNEYGKTKEID). Polar residues predominate over residues 157 to 173 (LLQNLSAESLTKPTESV). Over residues 175-196 (TAEKPKDYTENTVIRLDEHPSL) the composition is skewed to basic and acidic residues. Residues 216 to 236 (NSSQRTESDQLLGTTPVNVPS) show a composition bias toward polar residues. Residues 242–255 (DSDHESPSKEDEQQ) show a composition bias toward basic and acidic residues. The Nuclear localization signal 1 motif lies at 298-305 (QKKLPKVK). 2 stretches are compositionally biased toward polar residues: residues 329–357 (GVSQ…SGTI) and 376–391 (SKAQ…NVSN). Composition is skewed to basic and acidic residues over residues 428–453 (GKGD…EKPS) and 477–487 (KTSEKKLKLDS). The Nuclear localization signal 2 motif lies at 444 to 451 (EKRSPTEK). The segment covering 489 to 498 (MISSKATQPH) has biased composition (polar residues). A compositionally biased stretch (basic and acidic residues) spans 512-528 (DKQDSRNNRKSTVGKDD). The C2HC pre-PHD-type zinc-finger motif lies at 561-612 (KFTCAFCQCSEDTEASGEMTHYYRGEPVSADFNGGSKVIHVHKNCAEWAPNV). A PHD-type; degenerate zinc finger spans residues 632 to 681 (ISCSCCGLKGAALGCYNKSCKNSFHVTCAKLIPECRWDNVKFVMLCPLDA). BRCT domains are found at residues 724–819 (KQFH…PYEI) and 840–941 (KKPK…LVLI).

Forms heterodimer with BARD1/ROW1. As to expression, expressed ubiquitously with highest levels in flower buds. Mostly expressed in flowers and siliques, and, to a lower extent, in roots, rosette leaves, inflorescence and young cauline leaves.

The protein localises to the nucleus. Plays a role in DNA repair and in cell-cycle control. Required for the repair of DNA double-strand breaks (DSBs), both natural and induced by genotoxic stress, by homologous recombination (HR). The chain is Protein BREAST CANCER SUSCEPTIBILITY 1 homolog from Arabidopsis thaliana (Mouse-ear cress).